Here is a 500-residue protein sequence, read N- to C-terminus: NAD(P)H-quinone oxidoreductase chain 4, chloroplastic (500 aa).

14 helical membrane-spanning segments follow: residues 4-24, 37-57, 87-107, 113-130, 134-154, 167-187, 208-228, 242-262, 272-292, 305-325, 330-350, 386-406, 416-436, and 462-482; these read FPWLTIIVLFPISAGSFIFFL, IGICLLELLLITYAFCYFFQL, IGPILLTGFITTLATLAAWPV, LFHFLMLAMYSGQIGLFS, LLLFFIMWELELIPVYLLLSM, FILYTAGGSIFLLMGVLGMGL, ALEILFYFGFLIAYAVKLPII, HYSTCMLLAGILLKMGAYGLI, AHSIFSPWLMIVGTVQIIYAA, IAYSSVSHMGFIIIGICSITD, GAVLQIISHGFIGAALFFLAG, LALPGMSGFVAELIVFFGIIT, VLITFVMAIGIILTPIYSLSM, and LFISICILLPVIGIGIYPDFV.

The protein belongs to the complex I subunit 4 family.

It is found in the plastid. It localises to the chloroplast thylakoid membrane. The catalysed reaction is a plastoquinone + NADH + (n+1) H(+)(in) = a plastoquinol + NAD(+) + n H(+)(out). The enzyme catalyses a plastoquinone + NADPH + (n+1) H(+)(in) = a plastoquinol + NADP(+) + n H(+)(out). In Ceratophyllum demersum (Rigid hornwort), this protein is NAD(P)H-quinone oxidoreductase chain 4, chloroplastic.